A 100-amino-acid chain; its full sequence is Aspartyl/glutamyl-tRNA(Asn/Gln) amidotransferase subunit C (100 aa).

This sequence belongs to the GatC family. In terms of assembly, heterotrimer of A, B and C subunits.

The enzyme catalyses L-glutamyl-tRNA(Gln) + L-glutamine + ATP + H2O = L-glutaminyl-tRNA(Gln) + L-glutamate + ADP + phosphate + H(+). It carries out the reaction L-aspartyl-tRNA(Asn) + L-glutamine + ATP + H2O = L-asparaginyl-tRNA(Asn) + L-glutamate + ADP + phosphate + 2 H(+). Allows the formation of correctly charged Asn-tRNA(Asn) or Gln-tRNA(Gln) through the transamidation of misacylated Asp-tRNA(Asn) or Glu-tRNA(Gln) in organisms which lack either or both of asparaginyl-tRNA or glutaminyl-tRNA synthetases. The reaction takes place in the presence of glutamine and ATP through an activated phospho-Asp-tRNA(Asn) or phospho-Glu-tRNA(Gln). In Streptococcus equi subsp. zooepidemicus (strain MGCS10565), this protein is Aspartyl/glutamyl-tRNA(Asn/Gln) amidotransferase subunit C.